The sequence spans 393 residues: uncharacterized protein (393 aa).

Residues 250–389 (AVIVYDTMYN…KCYEFGKRLA (140 aa)) enclose the Flavodoxin-like domain.

This is an uncharacterized protein from Methanocaldococcus jannaschii (strain ATCC 43067 / DSM 2661 / JAL-1 / JCM 10045 / NBRC 100440) (Methanococcus jannaschii).